Consider the following 255-residue polypeptide: Membrane protein insertase YidC 2 (255 aa).

Residues 1–20 (MKKKLGLLAMVVALMAITAG) form the signal peptide. Residue C21 is the site of N-palmitoyl cysteine attachment. A lipid anchor (S-diacylglycerol cysteine) is attached at C21. 5 helical membrane passes run 59 to 79 (YGLA…PLMI), 129 to 149 (LAGC…YHAI), 160 to 180 (FLWF…VAAI), 202 to 222 (MMLW…PAAL), and 223 to 243 (SLYW…IKGP).

Belongs to the OXA1/ALB3/YidC family. Type 2 subfamily.

The protein resides in the cell membrane. Its function is as follows. Required for the insertion and/or proper folding and/or complex formation of integral membrane proteins into the membrane. Involved in integration of membrane proteins that insert both dependently and independently of the Sec translocase complex, as well as at least some lipoproteins. The sequence is that of Membrane protein insertase YidC 2 from Bacillus anthracis.